The sequence spans 124 residues: Kalata-B1 (124 aa).

Positions 1–22 are cleaved as a signal peptide; the sequence is MAKFTVCLLLCLLLAAFVGAFG. Positions 23-88 are excised as a propeptide; it reads SELSDSHKTT…QVFLKQLQLK (66 aa). Residues 89–117 constitute a cross-link (cyclopeptide (Gly-Asn)); that stretch reads GLPVCGETCVGGTCNTPGCTCSWPVCTRN. 3 disulfides stabilise this stretch: Cys-93–Cys-107, Cys-97–Cys-109, and Cys-102–Cys-114. The propeptide occupies 118-124; the sequence is GLPSLAA.

The protein belongs to the cyclotide family. Moebius subfamily. Kalata-B1 is a cyclic peptide which occurs in three forms: with unmodified Trp-111, with Trp-111 oxidized to form oxindolylalanine and with Trp-111 oxidized to form N-formylkynurenine. Oxidation is enhanced by exposure to sunlight. In terms of tissue distribution, leaves and stems. Lower in roots.

Functionally, probably participates in a plant defense mechanism. Has antibiotic activity. Has a diuretic effect. Has a uterotonic effect in humans. Active against the Gram-positive S.aureus with a minimum inhibition concentration of approximately 0.2 microM. Relatively ineffective against Gram-negative bacteria such as E.coli and P.aeruginosa. Inhibitory effect on the growth and development of larvae from H.punctigera. The unmodified form has hemolytic activity, the oxidized form lacks hemolytic activity. If the protein is linearized, hemolytic activity is lost. In Oldenlandia affinis, this protein is Kalata-B1 (OAK1).